Here is a 338-residue protein sequence, read N- to C-terminus: tRNA (cytidine(56)-2'-O)-methyltransferase (338 aa).

S-adenosyl-L-methionine-binding positions include L79 and 105–109 (GSEKV). In terms of domain architecture, HD spans 188 to 295 (LINHVKSVKE…VAHADNLFAG (108 aa)).

This sequence belongs to the aTrm56 family. As to quaternary structure, homodimer.

The protein localises to the cytoplasm. It carries out the reaction cytidine(56) in tRNA + S-adenosyl-L-methionine = 2'-O-methylcytidine(56) in tRNA + S-adenosyl-L-homocysteine + H(+). Specifically catalyzes the AdoMet-dependent 2'-O-ribose methylation of cytidine at position 56 in tRNAs. The chain is tRNA (cytidine(56)-2'-O)-methyltransferase from Thermoplasma volcanium (strain ATCC 51530 / DSM 4299 / JCM 9571 / NBRC 15438 / GSS1).